Consider the following 185-residue polypeptide: Large ribosomal subunit protein uL22 (185 aa).

Residues 157–185 (VAAPSPEEDAPKKKQSKKKMARQKLMQRD) form a disordered region. Positions 169-178 (KKQSKKKMAR) are enriched in basic residues.

The protein belongs to the universal ribosomal protein uL22 family.

The protein is Large ribosomal subunit protein uL22 (RpL17) of Ixodes scapularis (Black-legged tick).